A 111-amino-acid chain; its full sequence is uncharacterized protein (111 aa).

A signal peptide spans 1–18 (MGKSMEEGIFVKVFPSKA).

This is an uncharacterized protein from Acidianus convivator (ATV).